The following is a 130-amino-acid chain: Cytochrome c-type biogenesis protein CcmE (130 aa).

Residues Met-1–Arg-7 lie on the Cytoplasmic side of the membrane. The chain crosses the membrane as a helical; Signal-anchor for type II membrane protein span at residues Leu-8–Thr-28. The Extracellular segment spans residues Leu-29–Lys-130. The heme site is built by His-120 and Tyr-124.

The protein belongs to the CcmE/CycJ family.

It is found in the cell membrane. In terms of biological role, heme chaperone required for the biogenesis of c-type cytochromes. Transiently binds heme delivered by CcmC and transfers the heme to apo-cytochromes in a process facilitated by CcmF and CcmH. This Wolbachia pipientis wMel protein is Cytochrome c-type biogenesis protein CcmE.